We begin with the raw amino-acid sequence, 616 residues long: Chaperone protein HscA (616 aa).

This sequence belongs to the heat shock protein 70 family.

Functionally, chaperone involved in the maturation of iron-sulfur cluster-containing proteins. Has a low intrinsic ATPase activity which is markedly stimulated by HscB. Involved in the maturation of IscU. This is Chaperone protein HscA from Proteus mirabilis (strain HI4320).